The chain runs to 267 residues: Distal basal body ring component protein (267 aa).

Residues 1-29 form the signal peptide; the sequence is MKAFLFAAAATLVITALSAPAFAGTPVTL.

As to quaternary structure, flaD is a subunit of the flagellar transenvelope basal body.

It is found in the periplasm. The protein localises to the bacterial flagellum basal body. In terms of biological role, flaD might be the structural protein of the distal basal body ring P, or it is necessary for the assembly of the P ring. This Caulobacter vibrioides (strain ATCC 19089 / CIP 103742 / CB 15) (Caulobacter crescentus) protein is Distal basal body ring component protein (flaD).